Reading from the N-terminus, the 392-residue chain is uncharacterized protein (392 aa).

Residues 1-34 constitute a mitochondrion transit peptide; sequence MCISSSSLLCGINSLKYASNRVGILIPPFQTASS. A run of 8 helical transmembrane segments spans residues 115-135, 150-172, 185-205, 208-225, 277-297, 299-319, 321-341, and 350-370; these read VAIM…WHWD, FRFM…WWTL, LLVN…KFGV, ALSV…VALQ, ATFV…AVYA, AAIF…VYPV, AGIF…LNYE, and AHVS…PAMW. Residue serine 292 is the Nucleophile of the active site. Histidine 351 is an active-site residue.

The protein belongs to the peptidase S54 family.

The protein resides in the mitochondrion inner membrane. This is an uncharacterized protein from Schizosaccharomyces pombe (strain 972 / ATCC 24843) (Fission yeast).